The chain runs to 253 residues: Triosephosphate isomerase (253 aa).

Residue 9-11 participates in substrate binding; that stretch reads NWK. The active-site Electrophile is H96. E169 (proton acceptor) is an active-site residue. Residues G175, S215, and 236–237 each bind substrate; that span reads GG.

Belongs to the triosephosphate isomerase family. As to quaternary structure, homodimer.

It localises to the cytoplasm. It carries out the reaction D-glyceraldehyde 3-phosphate = dihydroxyacetone phosphate. It functions in the pathway carbohydrate biosynthesis; gluconeogenesis. It participates in carbohydrate degradation; glycolysis; D-glyceraldehyde 3-phosphate from glycerone phosphate: step 1/1. Involved in the gluconeogenesis. Catalyzes stereospecifically the conversion of dihydroxyacetone phosphate (DHAP) to D-glyceraldehyde-3-phosphate (G3P). In Borrelia garinii subsp. bavariensis (strain ATCC BAA-2496 / DSM 23469 / PBi) (Borreliella bavariensis), this protein is Triosephosphate isomerase.